Reading from the N-terminus, the 663-residue chain is Rap1 GTPase-activating protein 1 (663 aa).

The 17-residue stretch at 1 to 17 (MIEKMQGSRMDEQRCSF) folds into the GoLoco domain. Residues 1-23 (MIEKMQGSRMDEQRCSFPPPLKT) form a disordered region. A Phosphoserine modification is found at Phe17. The Rap-GAP domain maps to 181 to 397 (IVTFDEHVIS…RTRAALLETL (217 aa)). Ser441 carries the post-translational modification Phosphoserine. Disordered stretches follow at residues 442–604 (MDAM…PHKR) and 616–645 (SVSTTSGGSSPGPSRSPHPDAGKLGDPACP). Positions 450-465 (KKPNTVSTSHSGSFAP) are enriched in polar residues. Ser484, Ser499, Ser515, Ser541, and Ser542 each carry phosphoserine. The span at 535 to 549 (ENSSTQSSPEMPTTK) shows a compositional bias: polar residues. Positions 567–579 (RSSSSASSFASVV) are enriched in low complexity. Residues 580–591 (EETEGVDGEDTG) show a composition bias toward acidic residues. The span at 616–630 (SVSTTSGGSSPGPSR) shows a compositional bias: low complexity.

Homodimer and heterodimer with RAP1B. Significant expression seen in the brain, kidney and pancreas. Abundant in the cerebral cortex and expressed at much lower levels in the spinal cord. Not detected in the lymphoid tissues.

It localises to the golgi apparatus membrane. Functionally, GTPase activator for the nuclear Ras-related regulatory protein RAP-1A (KREV-1), converting it to the putatively inactive GDP-bound state. This chain is Rap1 GTPase-activating protein 1 (RAP1GAP), found in Homo sapiens (Human).